Reading from the N-terminus, the 240-residue chain is Ubiquinone biosynthesis O-methyltransferase (240 aa).

The S-adenosyl-L-methionine site is built by Arg-44, Gly-64, Asp-85, and Met-129.

Belongs to the methyltransferase superfamily. UbiG/COQ3 family.

It carries out the reaction a 3-demethylubiquinol + S-adenosyl-L-methionine = a ubiquinol + S-adenosyl-L-homocysteine + H(+). The enzyme catalyses a 3-(all-trans-polyprenyl)benzene-1,2-diol + S-adenosyl-L-methionine = a 2-methoxy-6-(all-trans-polyprenyl)phenol + S-adenosyl-L-homocysteine + H(+). It functions in the pathway cofactor biosynthesis; ubiquinone biosynthesis. In terms of biological role, O-methyltransferase that catalyzes the 2 O-methylation steps in the ubiquinone biosynthetic pathway. The polypeptide is Ubiquinone biosynthesis O-methyltransferase (Escherichia fergusonii (strain ATCC 35469 / DSM 13698 / CCUG 18766 / IAM 14443 / JCM 21226 / LMG 7866 / NBRC 102419 / NCTC 12128 / CDC 0568-73)).